We begin with the raw amino-acid sequence, 304 residues long: m7GpppX diphosphatase (304 aa).

Substrate contacts are provided by residues E152, K174, and 235–246 (HYLPSYYHLHVH). Residues 242–246 (HLHVH) carry the Histidine triad motif motif. H244 serves as the catalytic Nucleophile.

The protein belongs to the HIT family.

The protein localises to the cytoplasm. Its subcellular location is the nucleus. It catalyses the reaction a 5'-end (N(7)-methyl 5'-triphosphoguanosine)-ribonucleoside in mRNA + H2O = N(7)-methyl-GMP + a 5'-end diphospho-ribonucleoside in mRNA + 2 H(+). Decapping scavenger enzyme that catalyzes the cleavage of a residual cap structure following the degradation of mRNAs by the 3'-&gt;5' exosome-mediated mRNA decay pathway. Hydrolyzes cap analog structures like 7-methylguanosine nucleoside triphosphate (m7GpppG) with up to 10 nucleotide substrates (small capped oligoribonucleotides) and specifically releases 5'-phosphorylated RNA fragments and 7-methylguanosine monophosphate (m7GMP). Has no activity towards mRNA molecules longer than 25 nucleotides. May also play a role in the 5'-&gt;3 mRNA decay pathway; m7GDP, the downstream product released by the 5'-&gt;3' mRNA mediated decapping activity, may be also converted by DCS1 to m7GMP. Inhibits mRNA translation. Binds to the m7GpppG cap analog. The polypeptide is m7GpppX diphosphatase (nhm1) (Schizosaccharomyces pombe (strain 972 / ATCC 24843) (Fission yeast)).